The following is a 221-amino-acid chain: Iron-sulfur cluster repair protein YtfE (221 aa).

This sequence belongs to the RIC family. YtfE subfamily. In terms of assembly, homodimer.

The protein resides in the cytoplasm. In terms of biological role, di-iron-containing protein involved in the repair of iron-sulfur clusters damaged by oxidative and nitrosative stress conditions. The chain is Iron-sulfur cluster repair protein YtfE from Pectobacterium atrosepticum (strain SCRI 1043 / ATCC BAA-672) (Erwinia carotovora subsp. atroseptica).